Reading from the N-terminus, the 848-residue chain is DNA mismatch repair protein MutS (848 aa).

An ATP-binding site is contributed by 605 to 612 (GPNMAGKS).

This sequence belongs to the DNA mismatch repair MutS family.

Functionally, this protein is involved in the repair of mismatches in DNA. It is possible that it carries out the mismatch recognition step. This protein has a weak ATPase activity. The protein is DNA mismatch repair protein MutS of Leptospira interrogans serogroup Icterohaemorrhagiae serovar Lai (strain 56601).